Consider the following 714-residue polypeptide: Fatty acid oxidation complex subunit alpha (714 aa).

Residues 1–190 (MEMASAFTLN…KLGLVDDVVP (190 aa)) form an enoyl-CoA hydratase region. A 3-hydroxyacyl-CoA dehydrogenase region spans residues 306-714 (APLNSVGILG…FWKTTATDLQ (409 aa)).

It in the N-terminal section; belongs to the enoyl-CoA hydratase/isomerase family. The protein in the central section; belongs to the 3-hydroxyacyl-CoA dehydrogenase family. As to quaternary structure, heterotetramer of two alpha chains (FadJ) and two beta chains (FadI).

The protein resides in the cytoplasm. The catalysed reaction is a (3S)-3-hydroxyacyl-CoA = a (2E)-enoyl-CoA + H2O. It catalyses the reaction a 4-saturated-(3S)-3-hydroxyacyl-CoA = a (3E)-enoyl-CoA + H2O. It carries out the reaction a (3S)-3-hydroxyacyl-CoA + NAD(+) = a 3-oxoacyl-CoA + NADH + H(+). The enzyme catalyses (3S)-3-hydroxybutanoyl-CoA = (3R)-3-hydroxybutanoyl-CoA. Its pathway is lipid metabolism; fatty acid beta-oxidation. In terms of biological role, catalyzes the formation of a hydroxyacyl-CoA by addition of water on enoyl-CoA. Also exhibits 3-hydroxyacyl-CoA epimerase and 3-hydroxyacyl-CoA dehydrogenase activities. This is Fatty acid oxidation complex subunit alpha from Escherichia coli (strain UTI89 / UPEC).